The primary structure comprises 87 residues: Small ribosomal subunit protein bS20 (87 aa).

Residues 1 to 26 are disordered; that stretch reads MANIKSAKKRAIQSEKRRKHNASRRS.

Belongs to the bacterial ribosomal protein bS20 family.

Functionally, binds directly to 16S ribosomal RNA. This is Small ribosomal subunit protein bS20 from Photorhabdus laumondii subsp. laumondii (strain DSM 15139 / CIP 105565 / TT01) (Photorhabdus luminescens subsp. laumondii).